The primary structure comprises 149 residues: Large ribosomal subunit protein bL9 (149 aa).

It belongs to the bacterial ribosomal protein bL9 family.

Binds to the 23S rRNA. This is Large ribosomal subunit protein bL9 from Xanthomonas oryzae pv. oryzae (strain MAFF 311018).